Here is a 63-residue protein sequence, read N- to C-terminus: Large ribosomal subunit protein uL29 (63 aa).

This sequence belongs to the universal ribosomal protein uL29 family.

In Serratia proteamaculans (strain 568), this protein is Large ribosomal subunit protein uL29.